The chain runs to 571 residues: Proline--tRNA ligase (571 aa).

It belongs to the class-II aminoacyl-tRNA synthetase family. ProS type 1 subfamily. As to quaternary structure, homodimer.

The protein localises to the cytoplasm. The catalysed reaction is tRNA(Pro) + L-proline + ATP = L-prolyl-tRNA(Pro) + AMP + diphosphate. Functionally, catalyzes the attachment of proline to tRNA(Pro) in a two-step reaction: proline is first activated by ATP to form Pro-AMP and then transferred to the acceptor end of tRNA(Pro). As ProRS can inadvertently accommodate and process non-cognate amino acids such as alanine and cysteine, to avoid such errors it has two additional distinct editing activities against alanine. One activity is designated as 'pretransfer' editing and involves the tRNA(Pro)-independent hydrolysis of activated Ala-AMP. The other activity is designated 'posttransfer' editing and involves deacylation of mischarged Ala-tRNA(Pro). The misacylated Cys-tRNA(Pro) is not edited by ProRS. The protein is Proline--tRNA ligase of Pediococcus pentosaceus (strain ATCC 25745 / CCUG 21536 / LMG 10740 / 183-1w).